The following is a 250-amino-acid chain: NADH-quinone oxidoreductase subunit C (250 aa).

Disordered regions lie at residues 1–33 and 228–250; these read MSDD…PTGE and LGGV…RSYN.

It belongs to the complex I 30 kDa subunit family. As to quaternary structure, NDH-1 is composed of 14 different subunits. Subunits NuoB, C, D, E, F, and G constitute the peripheral sector of the complex.

Its subcellular location is the cell membrane. It carries out the reaction a quinone + NADH + 5 H(+)(in) = a quinol + NAD(+) + 4 H(+)(out). Functionally, NDH-1 shuttles electrons from NADH, via FMN and iron-sulfur (Fe-S) centers, to quinones in the respiratory chain. The immediate electron acceptor for the enzyme in this species is believed to be a menaquinone. Couples the redox reaction to proton translocation (for every two electrons transferred, four hydrogen ions are translocated across the cytoplasmic membrane), and thus conserves the redox energy in a proton gradient. The chain is NADH-quinone oxidoreductase subunit C from Nocardioides sp. (strain ATCC BAA-499 / JS614).